We begin with the raw amino-acid sequence, 794 residues long: MFGAEDPANSSLVDNLGLTLPWSLNDPHFLTAGFSASTTTAALMSTLWIIVFAVPSERILGSLKFAITAALIHITSIPLGIGIAHLIEEADLNRWGNNMLADVLLTPDFWVFGVAAFASASMPLLWRRRTRLFLFTITLTLLLYTGTLADVTMLTATIIGTVAGELNRHRKTPGGRWLPGSLTVREARIMTAILVTAVAAGPVLAALNPLTHGPFSSATKLIWQPLVTEEHMHHLCHTDSTSDACQGALDQLQQHGVGPSVANLIPLILTVVLAMGLSRGRRLAWILAVLAQLISIAVLMFQLTKLSADSTDLLWSVNAFSVIVPWLVALAVLVFSRRAFQVKIDTTRISKSLGALMVTWLATAALWILATLFLPHAFHPHPTLGLAFKELPFRYLPPTIETVLSHQLFPRSPAGWAVFEWTGTLFWLVVAATLYHLLMGVPSNKAHEDQENAATLLRSGSGDHLSWMTIWGGNTYWWAPENAGYVAYRVKRGIAITLGEPILGPDSSVSKAELAAQFEEFASNQGWIVAWYSVCEEFSKERINAGHHTLRVAEEAVLSSANADFKGKHFQNVRTARNRAAKEGVSSIWTTWADLSAEMQHKIITLSEEWVSDKALPEMGFTLGTVNELSDPDTYLLLAIDEEEHLHGVTSWLPVYEKGRIVGYTLDVMRRDPQGFKSVIEFLISEAVVIARDHDLEWMSMSGAPLSTPPGVADDGTIGQILELLGRAMEPFYGFRSLAASKNKFHPEHHGWYLCYRDELSLPSIGLAVAACYLNEFPLPNWLKKTATSAPSHS.

A run of 9 helical transmembrane segments spans residues 34-54, 67-87, 99-119, 132-152, 257-277, 283-303, 315-335, 353-373, and 421-441; these read FSAS…VFAV, ITAA…AHLI, MLAD…AFAS, LFLF…ADVT, VGPS…AMGL, LAWI…MFQL, WSVN…VLVF, LGAL…ATLF, and WTGT…LMGV.

The protein localises to the cell membrane. This is an uncharacterized protein from Corynebacterium glutamicum (strain ATCC 13032 / DSM 20300 / JCM 1318 / BCRC 11384 / CCUG 27702 / LMG 3730 / NBRC 12168 / NCIMB 10025 / NRRL B-2784 / 534).